A 466-amino-acid polypeptide reads, in one-letter code: UDP-N-acetylmuramoylalanine--D-glutamate ligase (466 aa).

121 to 127 is an ATP binding site; that stretch reads GTNGKST.

Belongs to the MurCDEF family.

Its subcellular location is the cytoplasm. The enzyme catalyses UDP-N-acetyl-alpha-D-muramoyl-L-alanine + D-glutamate + ATP = UDP-N-acetyl-alpha-D-muramoyl-L-alanyl-D-glutamate + ADP + phosphate + H(+). The protein operates within cell wall biogenesis; peptidoglycan biosynthesis. Functionally, cell wall formation. Catalyzes the addition of glutamate to the nucleotide precursor UDP-N-acetylmuramoyl-L-alanine (UMA). This is UDP-N-acetylmuramoylalanine--D-glutamate ligase from Mesorhizobium japonicum (strain LMG 29417 / CECT 9101 / MAFF 303099) (Mesorhizobium loti (strain MAFF 303099)).